A 71-amino-acid polypeptide reads, in one-letter code: Translation initiation factor IF-1 (71 aa).

An S1-like domain is found at 1-71 (MSKDDLIQFT…LTKGRVIHRH (71 aa)).

Belongs to the IF-1 family. In terms of assembly, component of the 30S ribosomal translation pre-initiation complex which assembles on the 30S ribosome in the order IF-2 and IF-3, IF-1 and N-formylmethionyl-tRNA(fMet); mRNA recruitment can occur at any time during PIC assembly.

It is found in the cytoplasm. Functionally, one of the essential components for the initiation of protein synthesis. Stabilizes the binding of IF-2 and IF-3 on the 30S subunit to which N-formylmethionyl-tRNA(fMet) subsequently binds. Helps modulate mRNA selection, yielding the 30S pre-initiation complex (PIC). Upon addition of the 50S ribosomal subunit IF-1, IF-2 and IF-3 are released leaving the mature 70S translation initiation complex. This chain is Translation initiation factor IF-1, found in Rickettsia canadensis (strain McKiel).